A 310-amino-acid polypeptide reads, in one-letter code: D-alanine--D-alanine ligase (310 aa).

In terms of domain architecture, ATP-grasp spans 105-301 (KQAFVSAGIL…FEELVERIIL (197 aa)). 133–186 (SFGLPLVVKPVQEGSSVGISIVKEESQLAAAVKLAFRHDDEILVEQFIKGQEVQ) lines the ATP pocket. D254, E267, and N269 together coordinate Mg(2+).

The protein belongs to the D-alanine--D-alanine ligase family. The cofactor is Mg(2+). Mn(2+) serves as cofactor.

It is found in the cytoplasm. The enzyme catalyses 2 D-alanine + ATP = D-alanyl-D-alanine + ADP + phosphate + H(+). It participates in cell wall biogenesis; peptidoglycan biosynthesis. Its function is as follows. Cell wall formation. The sequence is that of D-alanine--D-alanine ligase from Pelobacter propionicus (strain DSM 2379 / NBRC 103807 / OttBd1).